The sequence spans 401 residues: NAD(P)H-quinone oxidoreductase subunit H, chloroplastic (401 aa).

It belongs to the complex I 49 kDa subunit family. As to quaternary structure, NDH is composed of at least 16 different subunits, 5 of which are encoded in the nucleus.

The protein localises to the plastid. It localises to the chloroplast thylakoid membrane. The enzyme catalyses a plastoquinone + NADH + (n+1) H(+)(in) = a plastoquinol + NAD(+) + n H(+)(out). It catalyses the reaction a plastoquinone + NADPH + (n+1) H(+)(in) = a plastoquinol + NADP(+) + n H(+)(out). In terms of biological role, NDH shuttles electrons from NAD(P)H:plastoquinone, via FMN and iron-sulfur (Fe-S) centers, to quinones in the photosynthetic chain and possibly in a chloroplast respiratory chain. The immediate electron acceptor for the enzyme in this species is believed to be plastoquinone. Couples the redox reaction to proton translocation, and thus conserves the redox energy in a proton gradient. This chain is NAD(P)H-quinone oxidoreductase subunit H, chloroplastic, found in Aethionema cordifolium (Lebanon stonecress).